The following is a 191-amino-acid chain: ATP synthase subunit b 1 (191 aa).

The chain crosses the membrane as a helical span at residues 7–25 (RMRILCLCATTLLMAGSAL).

It belongs to the ATPase B chain family. As to quaternary structure, F-type ATPases have 2 components, F(1) - the catalytic core - and F(0) - the membrane proton channel. F(1) has five subunits: alpha(3), beta(3), gamma(1), delta(1), epsilon(1). F(0) has three main subunits: a(1), b(2) and c(10-14). The alpha and beta chains form an alternating ring which encloses part of the gamma chain. F(1) is attached to F(0) by a central stalk formed by the gamma and epsilon chains, while a peripheral stalk is formed by the delta and b chains.

The protein resides in the cell inner membrane. Its function is as follows. F(1)F(0) ATP synthase produces ATP from ADP in the presence of a proton or sodium gradient. F-type ATPases consist of two structural domains, F(1) containing the extramembraneous catalytic core and F(0) containing the membrane proton channel, linked together by a central stalk and a peripheral stalk. During catalysis, ATP synthesis in the catalytic domain of F(1) is coupled via a rotary mechanism of the central stalk subunits to proton translocation. In terms of biological role, component of the F(0) channel, it forms part of the peripheral stalk, linking F(1) to F(0). In Syntrophotalea carbinolica (strain DSM 2380 / NBRC 103641 / GraBd1) (Pelobacter carbinolicus), this protein is ATP synthase subunit b 1.